Reading from the N-terminus, the 66-residue chain is Large ribosomal subunit protein bL35 (66 aa).

A compositionally biased stretch (basic residues) spans 1-26; it reads MPKMKTHRGSAKRFKKTASGKLKRGH. A disordered region spans residues 1-29; the sequence is MPKMKTHRGSAKRFKKTASGKLKRGHAYT.

Belongs to the bacterial ribosomal protein bL35 family.

The polypeptide is Large ribosomal subunit protein bL35 (Geobacillus kaustophilus (strain HTA426)).